Consider the following 650-residue polypeptide: DNA topoisomerase 3 (650 aa).

The Toprim domain maps to Met1–Ile134. Residues Glu7, Asp103, and Asp105 each contribute to the Mg(2+) site. Residues Phe155–Met617 enclose the Topo IA-type catalytic domain. Residues Ser194–Gln199 form an interaction with DNA region. Tyr342 (O-(5'-phospho-DNA)-tyrosine intermediate) is an active-site residue.

Belongs to the type IA topoisomerase family. Requires Mg(2+) as cofactor.

It catalyses the reaction ATP-independent breakage of single-stranded DNA, followed by passage and rejoining.. Functionally, releases the supercoiling and torsional tension of DNA, which is introduced during the DNA replication and transcription, by transiently cleaving and rejoining one strand of the DNA duplex. Introduces a single-strand break via transesterification at a target site in duplex DNA. The scissile phosphodiester is attacked by the catalytic tyrosine of the enzyme, resulting in the formation of a DNA-(5'-phosphotyrosyl)-enzyme intermediate and the expulsion of a 3'-OH DNA strand. The free DNA strand then undergoes passage around the unbroken strand, thus removing DNA supercoils. Finally, in the religation step, the DNA 3'-OH attacks the covalent intermediate to expel the active-site tyrosine and restore the DNA phosphodiester backbone. This is DNA topoisomerase 3 from Pasteurella multocida (strain Pm70).